A 376-amino-acid polypeptide reads, in one-letter code: Chorismate synthase ARO2 (376 aa).

Ser2 carries the N-acetylserine modification. The active site involves His17. Residues 39 to 61 (IQPQLTRRRPGQSKLSTPRDEKD) form a disordered region. Catalysis depends on residues His104 and Asp339.

This sequence belongs to the chorismate synthase family. Homotetramer.

It catalyses the reaction 5-O-(1-carboxyvinyl)-3-phosphoshikimate = chorismate + phosphate. The enzyme catalyses FMNH2 + NADP(+) = FMN + NADPH + 2 H(+). The protein operates within metabolic intermediate biosynthesis; chorismate biosynthesis; chorismate from D-erythrose 4-phosphate and phosphoenolpyruvate: step 7/7. Bifunctional chorismate synthase and flavin reductase that catalyzes the conversion of 5-enolpyruvylshikimate 3-phosphate (EPSP) to form chorismate, which is the last common intermediate in the synthesis of the three aromatic amino acids phenylalanine, tyrosine and tryptophan. Also acts as a flavin reductase (FR) able to generate reduced flavin mononucleotide in the presence of NADPH. The protein is Chorismate synthase ARO2 of Saccharomyces cerevisiae (strain ATCC 204508 / S288c) (Baker's yeast).